A 259-amino-acid polypeptide reads, in one-letter code: Ras-related protein Rab-34 (259 aa).

Methionine 1 bears the N-acetylmethionine mark. Serine 62, valine 63, glycine 64, lysine 65, threonine 66, aspartate 78, tyrosine 81, and threonine 84 together coordinate GTP. Residue threonine 66 coordinates Mg(2+). The Switch 1 motif lies at 71–89 (RFCKDTFDKNYKATIGVDF). Threonine 84 and aspartate 107 together coordinate Mg(2+). The Switch 2 motif lies at 108 to 127 (TAGQERFKCIASTYYRGAQA). 4 residues coordinate GTP: glycine 110, lysine 167, aspartate 169, and serine 198. Serine 241 is subject to Phosphoserine. 2 S-geranylgeranyl cysteine lipidation sites follow: cysteine 257 and cysteine 258.

Belongs to the small GTPase superfamily. Rab family. Interacts with RILP. The GTP-bound form interacts with REP15. The cofactor is Mg(2+).

The protein resides in the cytoplasm. The protein localises to the golgi apparatus. It localises to the cytoplasmic vesicle. It is found in the phagosome. Its subcellular location is the phagosome membrane. The protein resides in the cell projection. The protein localises to the cilium. It localises to the cytoskeleton. It is found in the microtubule organizing center. Its subcellular location is the centrosome. The protein resides in the centriole. It catalyses the reaction GTP + H2O = GDP + phosphate + H(+). With respect to regulation, regulated by guanine nucleotide exchange factors (GEFs) which promote the exchange of bound GDP for free GTP. Regulated by GTPase activating proteins (GAPs) which increase the GTP hydrolysis activity. Inhibited by GDP dissociation inhibitors (GDIs). Functionally, the small GTPases Rab are key regulators of intracellular membrane trafficking, from the formation of transport vesicles to their fusion with membranes. Rabs cycle between an inactive GDP-bound form and an active GTP-bound form that is able to recruit to membranes different sets of downstream effectors directly responsible for vesicle formation, movement, tethering and fusion. RAB34 transports protein involved in the redistribution of lysosomes to the peri-Golgi region. Plays a role in the maturation of phagosomes that engulf pathogens, such as S.aureus and M.tuberculosis. Plays a role in the fusion of phagosomes with lysosomes. Required for the early steps of intracellular ciliogenesis, the cilium assembly pathway initiated by trafficking and docking of ciliary vesicles to the centrioles in the cytoplasm, followed by axoneme formation in the cytoplasm. After axoneme elongation, the centrioles migrate close to the cell surface so that ciliary vesicles can fuse with the plasma membrane to expose cilia to the extracellular space. It seems dispensable for ciliogenesis via the extracellular pathway where cilium assembly begins after migration and docking of the centriole to the plasma membrane. Also acts as a positive regulator of hedgehog signaling and regulates ciliary function. This chain is Ras-related protein Rab-34, found in Mus musculus (Mouse).